The following is a 263-amino-acid chain: Purine nucleoside phosphorylase SERP0752 (263 aa).

Zn(2+) contacts are provided by His79, Cys124, and His141.

The protein belongs to the purine nucleoside phosphorylase YfiH/LACC1 family. As to quaternary structure, homodimer. It depends on Cu(2+) as a cofactor. Requires Zn(2+) as cofactor.

The enzyme catalyses adenosine + phosphate = alpha-D-ribose 1-phosphate + adenine. It catalyses the reaction S-methyl-5'-thioadenosine + phosphate = 5-(methylsulfanyl)-alpha-D-ribose 1-phosphate + adenine. It carries out the reaction inosine + phosphate = alpha-D-ribose 1-phosphate + hypoxanthine. The catalysed reaction is adenosine + H2O + H(+) = inosine + NH4(+). Functionally, purine nucleoside enzyme that catalyzes the phosphorolysis of adenosine and inosine nucleosides, yielding D-ribose 1-phosphate and the respective free bases, adenine and hypoxanthine. Also catalyzes the phosphorolysis of S-methyl-5'-thioadenosine into adenine and S-methyl-5-thio-alpha-D-ribose 1-phosphate. Also has adenosine deaminase activity. The sequence is that of Purine nucleoside phosphorylase SERP0752 from Staphylococcus epidermidis (strain ATCC 35984 / DSM 28319 / BCRC 17069 / CCUG 31568 / BM 3577 / RP62A).